The chain runs to 218 residues: Large ribosomal subunit protein uL3 (218 aa).

Positions 133 to 158 (RGQGASHGAQAVHRRPGSIGGCATPG) are disordered.

Belongs to the universal ribosomal protein uL3 family. As to quaternary structure, part of the 50S ribosomal subunit. Forms a cluster with proteins L14 and L19.

Its function is as follows. One of the primary rRNA binding proteins, it binds directly near the 3'-end of the 23S rRNA, where it nucleates assembly of the 50S subunit. The protein is Large ribosomal subunit protein uL3 of Mycolicibacterium vanbaalenii (strain DSM 7251 / JCM 13017 / BCRC 16820 / KCTC 9966 / NRRL B-24157 / PYR-1) (Mycobacterium vanbaalenii).